Here is a 580-residue protein sequence, read N- to C-terminus: PTS system fructose-specific EIIB'BC component (580 aa).

PTS EIIB type-2 domains lie at 1–99 and 120–215; these read MSSS…QLAA and IVAI…KALA. Cys-126 acts as the Phosphocysteine intermediate; for EIIB activity in catalysis. At Cys-126 the chain carries Phosphocysteine; by EIIA. In terms of domain architecture, PTS EIIC type-2 spans 243 to 580; that stretch reads AYKHLMTGVS…LKKPVADVIA (338 aa). A run of 9 helical transmembrane segments spans residues 254-274, 289-309, 332-352, 369-389, 410-430, 451-471, 483-503, 509-529, and 549-571; these read MLPF…LGGI, LFQI…AGYI, LNAG…GVAA, VLIL…YVFG, SALL…GGPV, AAAM…TWVF, ATAA…PYAA, TIPA…TAGA, and HLLN…LRLL.

The protein localises to the cell inner membrane. The catalysed reaction is D-fructose(out) + N(pros)-phospho-L-histidyl-[protein] = D-fructose 1-phosphate(in) + L-histidyl-[protein]. Its function is as follows. The phosphoenolpyruvate-dependent sugar phosphotransferase system (sugar PTS), a major carbohydrate active transport system, catalyzes the phosphorylation of incoming sugar substrates concomitantly with their translocation across the cell membrane. The enzyme II FruAB PTS system is involved in fructose transport. This is PTS system fructose-specific EIIB'BC component from Xanthomonas campestris pv. campestris (strain ATCC 33913 / DSM 3586 / NCPPB 528 / LMG 568 / P 25).